The following is a 325-amino-acid chain: RepFIB replication protein A (325 aa).

The segment at 279–298 (APNDESKENPLPPSPAEKVS) is disordered.

The protein belongs to the initiator RepB protein family.

Functionally, this protein is essential for plasmid replication; it is involved in copy control functions. In vitro, binds to the DNA repeat units, BCDD'D'', EFG and HIJ. The polypeptide is RepFIB replication protein A (repA) (Escherichia coli).